Reading from the N-terminus, the 148-residue chain is SsrA-binding protein (148 aa).

The protein belongs to the SmpB family.

Its subcellular location is the cytoplasm. In terms of biological role, required for rescue of stalled ribosomes mediated by trans-translation. Binds to transfer-messenger RNA (tmRNA), required for stable association of tmRNA with ribosomes. tmRNA and SmpB together mimic tRNA shape, replacing the anticodon stem-loop with SmpB. tmRNA is encoded by the ssrA gene; the 2 termini fold to resemble tRNA(Ala) and it encodes a 'tag peptide', a short internal open reading frame. During trans-translation Ala-aminoacylated tmRNA acts like a tRNA, entering the A-site of stalled ribosomes, displacing the stalled mRNA. The ribosome then switches to translate the ORF on the tmRNA; the nascent peptide is terminated with the 'tag peptide' encoded by the tmRNA and targeted for degradation. The ribosome is freed to recommence translation, which seems to be the essential function of trans-translation. The sequence is that of SsrA-binding protein from Ehrlichia ruminantium (strain Gardel).